Here is a 124-residue protein sequence, read N- to C-terminus: Outer dense fiber protein 2 (124 aa).

The stretch at 13–124 (KEDSERLMEQ…EAIMEQLKEL (112 aa)) forms a coiled coil.

This sequence belongs to the ODF2 family. As to quaternary structure, self-associates. Associates with microtubules and forms a fibrillar structure partially linked to the microtubule network. Interacts through its C-terminus with PLK1. Interacts with ODF1. Interacts with MARK4; the interaction is required for localization of ODF2 to centrioles. Interacts with TSSK4. Interacts with AKNA. Interacts with QRICH2. Interacts with CFAP58. Interacts with BBOF1. Interacts with CCDC38. Interacts with CCDC42. Post-translationally, tyrosine phosphorylated. Detected in sperm flagella (at protein level).

Its subcellular location is the cytoplasm. It is found in the cytoskeleton. It localises to the microtubule organizing center. The protein localises to the centrosome. The protein resides in the cell projection. Its subcellular location is the cilium. It is found in the centriole. It localises to the spindle pole. The protein localises to the flagellum. In terms of biological role, seems to be a major component of sperm tail outer dense fibers (ODF). ODFs are filamentous structures located on the outside of the axoneme in the midpiece and principal piece of the mammalian sperm tail and may help to maintain the passive elastic structures and elastic recoil of the sperm tail. May have a modulating influence on sperm motility. Functions as a general scaffold protein that is specifically localized at the distal/subdistal appendages of mother centrioles. Component of the centrosome matrix required for the localization of PLK1 and NIN to the centrosomes. Required for the formation and/or maintenance of normal CETN1 assembly. The polypeptide is Outer dense fiber protein 2 (Mesocricetus auratus (Golden hamster)).